The sequence spans 178 residues: Large ribosomal subunit protein uL6 (178 aa).

Belongs to the universal ribosomal protein uL6 family. As to quaternary structure, part of the 50S ribosomal subunit.

Its function is as follows. This protein binds to the 23S rRNA, and is important in its secondary structure. It is located near the subunit interface in the base of the L7/L12 stalk, and near the tRNA binding site of the peptidyltransferase center. In Lactococcus lactis subsp. lactis (strain IL1403) (Streptococcus lactis), this protein is Large ribosomal subunit protein uL6.